The primary structure comprises 396 residues: Tryptophan synthase beta chain (396 aa).

Lysine 86 is modified (N6-(pyridoxal phosphate)lysine).

The protein belongs to the TrpB family. In terms of assembly, tetramer of two alpha and two beta chains. Pyridoxal 5'-phosphate serves as cofactor.

It carries out the reaction (1S,2R)-1-C-(indol-3-yl)glycerol 3-phosphate + L-serine = D-glyceraldehyde 3-phosphate + L-tryptophan + H2O. Its pathway is amino-acid biosynthesis; L-tryptophan biosynthesis; L-tryptophan from chorismate: step 5/5. The beta subunit is responsible for the synthesis of L-tryptophan from indole and L-serine. The sequence is that of Tryptophan synthase beta chain from Vibrio campbellii (strain ATCC BAA-1116).